We begin with the raw amino-acid sequence, 232 residues long: uncharacterized protein (232 aa).

This is an uncharacterized protein from Eriophyes pyri (pearleaf blister mite).